Here is a 1881-residue protein sequence, read N- to C-terminus: Nuclear pore membrane glycoprotein 210-like (1881 aa).

Positions 1 to 32 (MIAFGAPRRRSFGLLFSLAPHLFFLFLIGTLA) are cleaved as a signal peptide. N-linked (GlcNAc...) asparagine glycosylation is found at Asn80, Asn344, and Asn808. Residues 1078–1150 (FPPFRLIPEK…TIQTVNEDTG (73 aa)) enclose the BIG2 domain. A glycan (N-linked (GlcNAc...) asparagine) is linked at Asn1441. A helical membrane pass occupies residues 1804–1824 (YQILLFTLFAVLASTSFIFLA).

This sequence belongs to the NUP210 family. As to expression, expressed in testis.

The protein localises to the nucleus membrane. Its subcellular location is the nucleus. It is found in the nucleoplasm. The chain is Nuclear pore membrane glycoprotein 210-like (Nup210l) from Mus musculus (Mouse).